The primary structure comprises 564 residues: Proline--tRNA ligase 1 (564 aa).

The protein belongs to the class-II aminoacyl-tRNA synthetase family. ProS type 1 subfamily. In terms of assembly, homodimer.

It is found in the cytoplasm. It carries out the reaction tRNA(Pro) + L-proline + ATP = L-prolyl-tRNA(Pro) + AMP + diphosphate. Its function is as follows. Catalyzes the attachment of proline to tRNA(Pro) in a two-step reaction: proline is first activated by ATP to form Pro-AMP and then transferred to the acceptor end of tRNA(Pro). As ProRS can inadvertently accommodate and process non-cognate amino acids such as alanine and cysteine, to avoid such errors it has two additional distinct editing activities against alanine. One activity is designated as 'pretransfer' editing and involves the tRNA(Pro)-independent hydrolysis of activated Ala-AMP. The other activity is designated 'posttransfer' editing and involves deacylation of mischarged Ala-tRNA(Pro). The misacylated Cys-tRNA(Pro) is not edited by ProRS. The sequence is that of Proline--tRNA ligase 1 from Streptomyces avermitilis (strain ATCC 31267 / DSM 46492 / JCM 5070 / NBRC 14893 / NCIMB 12804 / NRRL 8165 / MA-4680).